Reading from the N-terminus, the 664-residue chain is Prelamin-A/C (664 aa).

The residue at position 1 (M1) is an N-acetylmethionine. Residues 1–24 (METPSQRRATRSGAQASSTPLSPT) form a disordered region. Positions 1–33 (METPSQRRATRSGAQASSTPLSPTRITRLQEKE) are head. An interaction with MLIP region spans residues 1–130 (METPSQRRAT…TKKEGDLMAA (130 aa)). A Phosphothreonine modification is found at T3. A Phosphoserine modification is found at S5. Position 10 is a phosphothreonine (T10). A phosphoserine mark is found at S12 and S18. Residue T19 is modified to Phosphothreonine. Position 22 is a phosphoserine (S22). The region spanning 31–387 (EKEDLQELND…KLLEGEEERL (357 aa)) is the IF rod domain. At K32 the chain carries N6-acetyllysine; alternate. K32 carries the post-translational modification N6-succinyllysine; alternate. Residue K32 forms a Glycyl lysine isopeptide (Lys-Gly) (interchain with G-Cter in SUMO2); alternate linkage. The tract at residues 34-70 (DLQELNDRLAVYIDRVRSLETENAGLRLRITESEEVV) is coil 1A. A phosphoserine mark is found at S51, S66, and S71. The interval 71 to 80 (SREVSGIKSA) is linker 1. K78 and K97 each carry N6-acetyllysine. A coil 1B region spans residues 81–218 (YEAELGDARK…NIYSEELRET (138 aa)). K97 participates in a covalent cross-link: Glycyl lysine isopeptide (Lys-Gly) (interchain with G-Cter in SUMO2). At S107 the chain carries Phosphoserine. Residues K108, K114, K123, K135, K144, and K155 each carry the N6-acetyllysine modification. K171 carries the post-translational modification N6-acetyllysine; alternate. At K171 the chain carries N6-succinyllysine; alternate. Residue K171 forms a Glycyl lysine isopeptide (Lys-Gly) (interchain with G-Cter in SUMO2); alternate linkage. N6-acetyllysine occurs at positions 180, 201, and 208. K201 participates in a covalent cross-link: Glycyl lysine isopeptide (Lys-Gly) (interchain with G-Cter in SUMO2); alternate. K201 is covalently cross-linked (Glycyl lysine isopeptide (Lys-Gly) (interchain with G-Cter in SUMO); alternate). K208 participates in a covalent cross-link: Glycyl lysine isopeptide (Lys-Gly) (interchain with G-Cter in SUMO2). Residue S212 is modified to Phosphoserine. Residues K219 and K233 each participate in a glycyl lysine isopeptide (Lys-Gly) (interchain with G-Cter in SUMO2) cross-link. Residues 219–242 (KRRHETRLVEIDNGKQREFESRLA) form a linker 2 region. 4 positions are modified to N6-acetyllysine: K233, K260, K265, and K270. Positions 243–383 (DALQDLRAQH…HAYRKLLEGE (141 aa)) are coil 2. Residue K260 forms a Glycyl lysine isopeptide (Lys-Gly) (interchain with G-Cter in SUMO2); alternate linkage. A Glycyl lysine isopeptide (Lys-Gly) (interchain with G-Cter in SUMO2); alternate cross-link involves residue K270. Phosphoserine is present on residues S277, S282, S301, and S307. K311 participates in a covalent cross-link: Glycyl lysine isopeptide (Lys-Gly) (interchain with G-Cter in SUMO2); alternate. An N6-acetyllysine mark is found at K311, K316, and K341. Residues K366 and K378 each participate in a glycyl lysine isopeptide (Lys-Gly) (interchain with G-Cter in SUMO2) cross-link. Residues 384–442 (EERLRLSPSPTSQRSRGRASSHSSQTQSGGSVTKKRKLESSESRSSFSQHARTSGRVAV) are disordered. Positions 384 to 664 (EERLRLSPSP…TQSPQNCSIM (281 aa)) are tail. Phosphoserine is present on residues S390, S392, S395, S398, S403, S404, S406, S407, and S414. Positions 403 to 414 (SSHSSQTQSGGS) are enriched in low complexity. Phosphothreonine is present on T416. K417 carries the N6-acetyllysine modification. Residues K417 and K420 each participate in a glycyl lysine isopeptide (Lys-Gly) (interchain with G-Cter in SUMO2) cross-link. Positions 417–422 (KKRKLE) match the Nuclear localization signal motif. Phosphoserine occurs at positions 423, 426, 429, and 431. Residues 428 to 545 (SSFSQHARTS…EEVAMRKLVR (118 aa)) enclose the LTD domain. K450 participates in a covalent cross-link: Glycyl lysine isopeptide (Lys-Gly) (interchain with G-Cter in SUMO2); alternate. 2 positions are modified to N6-acetyllysine: K450 and K457. 2 positions are modified to phosphoserine: S458 and S463. Glycyl lysine isopeptide (Lys-Gly) (interchain with G-Cter in SUMO2) cross-links involve residues K470 and K486. Residue K486 is modified to N6-acetyllysine. Residues T496 and T505 each carry the phosphothreonine modification. Phosphoserine occurs at positions 533 and 546. A Phosphothreonine modification is found at T548. The disordered stretch occupies residues 555–577 (DEDGDDLLHHHHGSHGSSSGDPA). 2 positions are modified to phosphoserine: S568 and S571. K597 participates in a covalent cross-link: Glycyl lysine isopeptide (Lys-Gly) (interchain with G-Cter in SUMO2); alternate. A Glycyl lysine isopeptide (Lys-Gly) (interchain with G-Cter in SUMO1); alternate cross-link involves residue K597. Positions 598–620 (ASASSSGAQVGGSISSGSSASSV) are disordered. Residues S612, S613, S616, and S619 each carry the phosphoserine modification. O-linked (GlcNAc) serine glycosylation is found at S625 and S628. 3 positions are modified to phosphoserine: S628, S632, and S636. The propeptide at 647 to 661 (LLGNSRPRTQSPQNC) is removed in Lamin-A/C form. C661 bears the Cysteine methyl ester mark. C661 is lipidated: S-farnesyl cysteine. Residues 662-664 (SIM) constitute a propeptide, removed in Prelamin-A/C form and in Lamin-A/C form.

It belongs to the intermediate filament family. As to quaternary structure, homodimer of lamin A and lamin C. Lamin dimers then assemble into dimeric head-to-tail polymers. Ultimately, two head-to-tail polymers assemble laterally into a protofilament with a uniformly shaped rod of 3.5 nm in diameter. Interacts with lamin-associated polypeptides IA, IB and TMPO-alpha, RB1 and with emerin. Interacts with SREBF1, SREBF2, SUN2 and TMEM43. Interacts with TMEM201. Proteolytically processed isoform A interacts with NARF. Interacts with SUN1. Interacts with MLIP. Interacts with DMPK; may regulate nuclear envelope stability. Interacts with SUV39H1; the interaction increases stability of SUV39H1. Interacts with SYNE2. Interacts with ITSN1 isoform 2. Interacts with IFFO1; enables the formation of an interior nucleoskeleton that is recruited to DNA double-strand breaks. Interacts with EMD. In terms of assembly, interacts (via C-terminus) with LEMD2 (via N-terminus) (in vitro). Proteolytic cleavage of the C-terminal of 18 residues of prelamin-A/C results in the production of lamin-A/C. The prelamin-A/C maturation pathway includes farnesylation of CAAX motif by protein farnesyltransferase (FNTA and FNTB), removal of the last three amino acids (-AAX) by RCE1/FACE2 and/or ZMPSTE24, methylation of the C-terminal cysteine by ICMT and endoproteolytic removal of the last 15 C-terminal amino acids by ZMPSTE24. Proteolytic cleavage requires prior farnesylation and methylation, and absence of these blocks cleavage. Post-translationally, farnesylation of prelamin-A/C facilitates nuclear envelope targeting. In terms of processing, phosphorylation plays a key role in lamin organization, subcellular localization and nuclear envelope disintegration. Phosphorylation by CDK1 at Ser-22 and Ser-392 at the onset of mitosis drives lamin disassembly and nuclear envelope breakdown. Phosphorylation at Ser-22 and Ser-392 during interphase promotes localization to the nucleoplasm and regulates lamina assembly. Phosphorylation at Ser-22, Ser-392 and Ser-628 during interphase causes redistribution between the nucleus and the cytoplasm. Phosphorylation at Ser-22 by CDK1 regulates matrix stiffness. Phosphorylation status of Ser-22 determines its localization between double-strand break (DSB) sites and the nuclear matrix. Phosphorylated by ATR at Ser-282 in response to DNA damage, leading to lamin disassembly and nuclear envelope rupture. Phosphorylation also regulates stability in micronuclei arising from genome instability: phosphorylation at Ser-395 by ATR in response to genome instability and double-stranded DNA breaks primes LMNA for subsequent phosphorylation at Ser-392 by CDK1 and micronuclei envelope rupture. The rupture of micronuclear envelope triggers the cGAS-STING pathway thereby activating the type I interferon response and innate immunity. Acetylation by KAT8 is required for nuclear architecture. Post-translationally, sumoylation is necessary for the localization to the nuclear envelope.

It is found in the nucleus lamina. Its subcellular location is the nucleus envelope. It localises to the nucleus. The protein localises to the nucleoplasm. The protein resides in the nucleus matrix. Functionally, lamins are intermediate filament proteins that assemble into a filamentous meshwork, and which constitute the major components of the nuclear lamina, a fibrous layer on the nucleoplasmic side of the inner nuclear membrane. Lamins provide a framework for the nuclear envelope, bridging the nuclear envelope and chromatin, thereby playing an important role in nuclear assembly, chromatin organization, nuclear membrane and telomere dynamics. Lamin A and C also regulate matrix stiffness by conferring nuclear mechanical properties. The structural integrity of the lamina is strictly controlled by the cell cycle, as seen by the disintegration and formation of the nuclear envelope in prophase and telophase, respectively. Lamin A and C are present in equal amounts in the lamina of mammals. Also invoved in DNA repair: recruited by DNA repair proteins XRCC4 and IFFO1 to the DNA double-strand breaks (DSBs) to prevent chromosome translocation by immobilizing broken DNA ends. Required for normal development of peripheral nervous system and skeletal muscle and for muscle satellite cell proliferation. Required for osteoblastogenesis and bone formation. Also prevents fat infiltration of muscle and bone marrow, helping to maintain the volume and strength of skeletal muscle and bone. Required for cardiac homeostasis. In terms of biological role, prelamin-A/C can accelerate smooth muscle cell senescence. It acts to disrupt mitosis and induce DNA damage in vascular smooth muscle cells (VSMCs), leading to mitotic failure, genomic instability, and premature senescence. In Sus scrofa (Pig), this protein is Prelamin-A/C (LMNA).